Here is a 1548-residue protein sequence, read N- to C-terminus: Lysine-specific demethylase 5D (1548 aa).

Residues 14–55 (CPVFEPSWAEFRDPLGYIAKIRPIAEKSGICKIRPPADWQPP) enclose the JmjN domain. An ARID domain is found at 79-169 (TRVKLNYLDQ…IIYPYEIFQS (91 aa)). Glycyl lysine isopeptide (Lys-Gly) (interchain with G-Cter in SUMO2) cross-links involve residues lysine 205, lysine 229, lysine 244, and lysine 279. Residues 208 to 229 (CYSRRGKRLQPEPEPTEEDIEK) are disordered. Phosphoserine occurs at positions 300 and 316. The PHD-type 1 zinc-finger motif lies at 325–371 (VCRICSRGDEVDKFLLCDGCSDNYHIFCLLPPLSEVPKGVWRCPKCI). Tyrosine 439 is a binding site for 2-oxoglutarate. Positions 467–633 (EYAACGWNLN…VGRQCIEHYR (167 aa)) constitute a JmjC domain. Residues histidine 513 and glutamate 515 each coordinate Fe cation. Serine 521, asparagine 523, and lysine 531 together coordinate 2-oxoglutarate. Residue histidine 601 coordinates Fe cation. The C5HC2 zinc finger occupies 706–758 (CIKCKTTCFLSALACYDCPDSLVCLSHINDLCKCSRNRQYLRYRYTLDELPAM). Phosphoserine is present on residues serine 889 and serine 893. Lysine 1123 participates in a covalent cross-link: Glycyl lysine isopeptide (Lys-Gly) (interchain with G-Cter in SUMO2). A PHD-type 2 zinc finger spans residues 1182–1243 (ICICGQVCAG…DTKFLCPLCM (62 aa)). Residue serine 1355 is modified to Phosphoserine. Positions 1438–1468 (KPENPGNWSEEQTPERRRQRRQKVVLSRKGE) are disordered.

This sequence belongs to the JARID1 histone demethylase family. In terms of assembly, interacts withPCGF6, MSH5, ZMYND8, AR. L-ascorbate serves as cofactor. Fe(2+) is required as a cofactor.

It is found in the nucleus. The catalysed reaction is N(6),N(6),N(6)-trimethyl-L-lysyl(4)-[histone H3] + 3 2-oxoglutarate + 3 O2 = L-lysyl(4)-[histone H3] + 3 formaldehyde + 3 succinate + 3 CO2. Its function is as follows. Histone demethylase that specifically demethylates 'Lys-4' of histone H3, thereby playing a central role in histone code. Does not demethylate histone H3 'Lys-9', H3 'Lys-27', H3 'Lys-36', H3 'Lys-79' or H4 'Lys-20'. Demethylates trimethylated and dimethylated but not monomethylated H3 'Lys-4'. May play a role in spermatogenesis. Involved in transcriptional repression of diverse metastasis-associated genes; in this function seems to cooperate with ZMYND8. Suppresses prostate cancer cell invasion. Regulates androgen receptor (AR) transcriptional activity by demethylating H3K4me3 active transcription marks. This Mus musculus (Mouse) protein is Lysine-specific demethylase 5D (Kdm5d).